A 464-amino-acid polypeptide reads, in one-letter code: Histidine--tRNA ligase (464 aa).

Belongs to the class-II aminoacyl-tRNA synthetase family. Homodimer.

The protein resides in the cytoplasm. The enzyme catalyses tRNA(His) + L-histidine + ATP = L-histidyl-tRNA(His) + AMP + diphosphate + H(+). The protein is Histidine--tRNA ligase of Stenotrophomonas maltophilia (strain K279a).